The primary structure comprises 118 residues: Small ribosomal subunit protein uS13 (118 aa).

The tract at residues 94 to 118 is disordered; the sequence is SLPVRGQRSKTNARTRKGPRKAIKK.

This sequence belongs to the universal ribosomal protein uS13 family. Part of the 30S ribosomal subunit. Forms a loose heterodimer with protein S19. Forms two bridges to the 50S subunit in the 70S ribosome.

In terms of biological role, located at the top of the head of the 30S subunit, it contacts several helices of the 16S rRNA. In the 70S ribosome it contacts the 23S rRNA (bridge B1a) and protein L5 of the 50S subunit (bridge B1b), connecting the 2 subunits; these bridges are implicated in subunit movement. Contacts the tRNAs in the A and P-sites. The polypeptide is Small ribosomal subunit protein uS13 (Psychromonas ingrahamii (strain DSM 17664 / CCUG 51855 / 37)).